Here is a 1127-residue protein sequence, read N- to C-terminus: Elongation factor-like GTPase 1 (1127 aa).

Positions 17–272 constitute a tr-type G domain; the sequence is ANIRNICVLA…LLKTLWGDYY (256 aa). Residues 26–33, 92–96, and 146–149 each bind GTP; these read AHVDHGKT, DSPGH, and NKID. The tract at residues 429–496 is disordered; it reads KPRPLTQEEM…VASVSRQPVS (68 aa). Basic and acidic residues-rich tracts occupy residues 438–452 and 474–484; these read MAQRRERARQRHAEK and SPHEDEPRGDE. Residue Lys-528 is modified to N6-acetyllysine.

It belongs to the TRAFAC class translation factor GTPase superfamily. Classic translation factor GTPase family. Associates with the 60S ribosomal subunit. Found in a complex consisting of the 60S ribosomal subunit, SBDS and EFL1.

The enzyme catalyses GTP + H2O = GDP + phosphate + H(+). With respect to regulation, GTPase activity is stimulated in the presence of 60S ribosome subunits. Functionally, GTPase involved in the biogenesis of the 60S ribosomal subunit and translational activation of ribosomes. Together with SBDS, triggers the GTP-dependent release of EIF6 from 60S pre-ribosomes in the cytoplasm, thereby activating ribosomes for translation competence by allowing 80S ribosome assembly and facilitating EIF6 recycling to the nucleus, where it is required for 60S rRNA processing and nuclear export. The sequence is that of Elongation factor-like GTPase 1 (Efl1) from Mus musculus (Mouse).